The chain runs to 446 residues: NADH-quinone oxidoreductase subunit D (446 aa).

Belongs to the complex I 49 kDa subunit family. As to quaternary structure, NDH-1 is composed of 14 different subunits. Subunits NuoB, C, D, E, F, and G constitute the peripheral sector of the complex.

The protein resides in the cell membrane. It carries out the reaction a quinone + NADH + 5 H(+)(in) = a quinol + NAD(+) + 4 H(+)(out). In terms of biological role, NDH-1 shuttles electrons from NADH, via FMN and iron-sulfur (Fe-S) centers, to quinones in the respiratory chain. The immediate electron acceptor for the enzyme in this species is believed to be a menaquinone. Couples the redox reaction to proton translocation (for every two electrons transferred, four hydrogen ions are translocated across the cytoplasmic membrane), and thus conserves the redox energy in a proton gradient. This chain is NADH-quinone oxidoreductase subunit D, found in Mycobacterium sp. (strain JLS).